The sequence spans 260 residues: Small ribosomal subunit protein uS2 (260 aa).

The disordered stretch occupies residues 225–260; sequence KGQTQTEAAPNAQAAPEAAAPAEQPAEEAAAASSEG. Positions 231–260 are enriched in low complexity; the sequence is EAAPNAQAAPEAAAPAEQPAEEAAAASSEG.

It belongs to the universal ribosomal protein uS2 family.

This chain is Small ribosomal subunit protein uS2, found in Rhodopirellula baltica (strain DSM 10527 / NCIMB 13988 / SH1).